We begin with the raw amino-acid sequence, 556 residues long: Copine-7 (556 aa).

C2 domains are found at residues 1–128 (MSGD…TRPL) and 135–262 (NAGK…AQWD). Positions 168, 174, 230, 232, and 238 each coordinate Ca(2+). In terms of domain architecture, VWFA spans 305 to 504 (HCTVAIDFTA…PALRDIVQFV (200 aa)). The disordered stretch occupies residues 536–556 (KDLPPRSLGGQTGEAGPSSAP).

It belongs to the copine family. The cofactor is Ca(2+).

The protein resides in the cytoplasm. It is found in the nucleus. The protein localises to the cell membrane. Its function is as follows. Calcium-dependent phospholipid-binding protein that may play a role in calcium-mediated intracellular processes. This chain is Copine-7, found in Rattus norvegicus (Rat).